A 188-amino-acid chain; its full sequence is Protein crossbronx-like (188 aa).

A UBC core domain is found at 15–174 (KQGYHILAEY…ANQVVKLHCG (160 aa)).

This sequence belongs to the ubiquitin-conjugating enzyme family. FTS subfamily.

This chain is Protein crossbronx-like, found in Drosophila simulans (Fruit fly).